Consider the following 463-residue polypeptide: ATP synthase subunit beta (463 aa).

ATP is bound at residue 152–159 (GGAGVGKT).

The protein belongs to the ATPase alpha/beta chains family. As to quaternary structure, F-type ATPases have 2 components, CF(1) - the catalytic core - and CF(0) - the membrane proton channel. CF(1) has five subunits: alpha(3), beta(3), gamma(1), delta(1), epsilon(1). CF(0) has three main subunits: a(1), b(2) and c(9-12). The alpha and beta chains form an alternating ring which encloses part of the gamma chain. CF(1) is attached to CF(0) by a central stalk formed by the gamma and epsilon chains, while a peripheral stalk is formed by the delta and b chains.

The protein resides in the cell inner membrane. The enzyme catalyses ATP + H2O + 4 H(+)(in) = ADP + phosphate + 5 H(+)(out). Functionally, produces ATP from ADP in the presence of a proton gradient across the membrane. The catalytic sites are hosted primarily by the beta subunits. This is ATP synthase subunit beta from Shewanella denitrificans (strain OS217 / ATCC BAA-1090 / DSM 15013).